The chain runs to 1087 residues: Band 4.1-like protein 3 (1087 aa).

The residue at position 1 (M1) is an N-acetylmethionine. Residues 1 to 43 form a disordered region; that stretch reads MTTESGSDSESKPDQEAEPQEAAGAQGRAGAPVPEPPKEEQQQ. At T2 the chain carries N-acetylthreonine; in Band 4.1-like protein 3, N-terminally processed. Residues 20-32 show a composition bias toward low complexity; the sequence is QEAAGAQGRAGAP. Phosphoserine is present on S88. In terms of domain architecture, FERM spans 110 to 391; it reads MQCKVILLDG…EHHTFFRLLL (282 aa). Positions 394–513 are hydrophilic; it reads APPKKFLTLG…PGLGTDSCPL (120 aa). Residues S420, S443, and S460 each carry the phosphoserine modification. Residues 459 to 469 show a composition bias toward polar residues; sequence ISQTNLITTVT. 4 disordered regions span residues 459–529, 541–563, 675–715, and 937–965; these read ISQT…TELR, GYEP…GPGR, SASL…EDAE, and SETL…SPGG. Phosphothreonine occurs at positions 469 and 492. Residues 514–860 form a spectrin--actin-binding region; it reads SPPSTHCAPT…VVQETVLVEE (347 aa). The span at 516–526 shows a compositional bias: polar residues; the sequence is PSTHCAPTSPT. The span at 681 to 691 shows a compositional bias: acidic residues; that stretch reads DPSDSSEEETD. Residues 698–707 are compositionally biased toward low complexity; the sequence is AADGETTATE. At T706 the chain carries Phosphothreonine. 3 positions are modified to phosphoserine: S708, S960, and S962. Residues 861–1083 are C-terminal (CTD); the sequence is RRVVHASGDA…VHKETEITPE (223 aa). Residues 947-960 show a composition bias toward polar residues; that stretch reads ESSTVKTETISFGS. A Phosphothreonine modification is found at T1081.

In terms of assembly, interacts (via FERM domain) with CADM1. Interacts (via FERM domain) with PRMT3; the interaction is direct and inhibits the protein-arginine N-methyltransferase activity of PRMT3. Interacts with PRMT5. Interacts with PRMT6. As to expression, expressed at high levels in brain, with lower levels in kidney, intestine, and testis. Detected in lung.

Its subcellular location is the cytoplasm. It localises to the cytoskeleton. The protein resides in the cell junction. It is found in the cell membrane. Tumor suppressor that inhibits cell proliferation and promotes apoptosis. Modulates the activity of protein arginine N-methyltransferases, including PRMT3 and PRMT5. The chain is Band 4.1-like protein 3 from Homo sapiens (Human).